A 406-amino-acid polypeptide reads, in one-letter code: Vacuole membrane protein 1 (406 aa).

Over residues M1 to H20 the composition is skewed to basic and acidic residues. Positions M1–R36 are disordered. A2 bears the N-acetylalanine mark. Topologically, residues A2–N43 are cytoplasmic. The span at N21–V30 shows a compositional bias: polar residues. A helical transmembrane segment spans residues I44–I64. Topologically, residues L65–S77 are extracellular. A helical transmembrane segment spans residues I78–A98. At H99 to Q109 the chain is on the cytoplasmic side. The chain crosses the membrane as a helical span at residues F110–G130. Over L131–K250 the chain is Extracellular. Positions G173 to I316 are VTT domain. Residues L251–F271 form a helical membrane-spanning segment. At D272–L273 the chain is on the cytoplasmic side. The helical transmembrane segment at A274–I294 threads the bilayer. Topologically, residues G295–K305 are extracellular. Residues I306–A326 form a helical membrane-spanning segment. The Cytoplasmic segment spans residues V327–W363. Residues L364–I384 traverse the membrane as a helical segment. At N385–K406 the chain is on the extracellular side.

Belongs to the VMP1 family. In terms of assembly, interacts with BECN1. Interacts with TJP1. Interacts with TP53INP2. Interacts with TMEM41B. Interacts with ATP2A2, PLN and SLN; competes with PLN and SLN to prevent them from forming an inhibitory complex with ATP2A2. Interacts with ATG2A.

The protein localises to the endoplasmic reticulum-Golgi intermediate compartment membrane. The protein resides in the cell membrane. It is found in the vacuole membrane. It localises to the endoplasmic reticulum membrane. The catalysed reaction is a 1,2-diacyl-sn-glycero-3-phospho-L-serine(in) = a 1,2-diacyl-sn-glycero-3-phospho-L-serine(out). It carries out the reaction cholesterol(in) = cholesterol(out). It catalyses the reaction a 1,2-diacyl-sn-glycero-3-phosphocholine(in) = a 1,2-diacyl-sn-glycero-3-phosphocholine(out). The enzyme catalyses a 1,2-diacyl-sn-glycero-3-phosphoethanolamine(in) = a 1,2-diacyl-sn-glycero-3-phosphoethanolamine(out). In terms of biological role, phospholipid scramblase involved in lipid homeostasis and membrane dynamics processes. Has phospholipid scramblase activity toward cholesterol and phosphatidylserine, as well as phosphatidylethanolamine and phosphatidylcholine. Required for autophagosome formation: participates in early stages of autophagosome biogenesis at the endoplasmic reticulum (ER) membrane by reequilibrating the leaflets of the ER as lipids are extracted by ATG2 (ATG2A or ATG2B) to mediate autophagosome assembly. Regulates ATP2A2 activity to control ER-isolation membrane contacts for autophagosome formation. In addition to autophagy, involved in other processes in which phospholipid scramblase activity is required. Modulates ER contacts with lipid droplets, mitochondria and endosomes. Plays an essential role in formation of cell junctions. Upon stress such as bacterial and viral infection, promotes formation of cytoplasmic vacuoles followed by cell death. Involved in the cytoplasmic vacuolization of acinar cells during the early stage of acute pancreatitis. This Pongo abelii (Sumatran orangutan) protein is Vacuole membrane protein 1.